The primary structure comprises 521 residues: Bifunctional purine biosynthesis protein PurH (521 aa).

In terms of domain architecture, MGS-like spans 1–145 (MIKQALISVS…KNHRDVTVVV (145 aa)).

The protein belongs to the PurH family.

It carries out the reaction (6R)-10-formyltetrahydrofolate + 5-amino-1-(5-phospho-beta-D-ribosyl)imidazole-4-carboxamide = 5-formamido-1-(5-phospho-D-ribosyl)imidazole-4-carboxamide + (6S)-5,6,7,8-tetrahydrofolate. The catalysed reaction is IMP + H2O = 5-formamido-1-(5-phospho-D-ribosyl)imidazole-4-carboxamide. It functions in the pathway purine metabolism; IMP biosynthesis via de novo pathway; 5-formamido-1-(5-phospho-D-ribosyl)imidazole-4-carboxamide from 5-amino-1-(5-phospho-D-ribosyl)imidazole-4-carboxamide (10-formyl THF route): step 1/1. Its pathway is purine metabolism; IMP biosynthesis via de novo pathway; IMP from 5-formamido-1-(5-phospho-D-ribosyl)imidazole-4-carboxamide: step 1/1. This chain is Bifunctional purine biosynthesis protein PurH, found in Burkholderia vietnamiensis (strain G4 / LMG 22486) (Burkholderia cepacia (strain R1808)).